The primary structure comprises 262 residues: Acyl-[acyl-carrier-protein]--UDP-N-acetylglucosamine O-acyltransferase (262 aa).

It belongs to the transferase hexapeptide repeat family. LpxA subfamily. Homotrimer.

Its subcellular location is the cytoplasm. The catalysed reaction is a (3R)-hydroxyacyl-[ACP] + UDP-N-acetyl-alpha-D-glucosamine = a UDP-3-O-[(3R)-3-hydroxyacyl]-N-acetyl-alpha-D-glucosamine + holo-[ACP]. The protein operates within glycolipid biosynthesis; lipid IV(A) biosynthesis; lipid IV(A) from (3R)-3-hydroxytetradecanoyl-[acyl-carrier-protein] and UDP-N-acetyl-alpha-D-glucosamine: step 1/6. Functionally, involved in the biosynthesis of lipid A, a phosphorylated glycolipid that anchors the lipopolysaccharide to the outer membrane of the cell. The sequence is that of Acyl-[acyl-carrier-protein]--UDP-N-acetylglucosamine O-acyltransferase from Paracidovorax citrulli (strain AAC00-1) (Acidovorax citrulli).